The following is a 471-amino-acid chain: Glutamate--tRNA ligase (471 aa).

Residues 9–19 (PSPTGYLHVGG) carry the 'HIGH' region motif. The 'KMSKS' region signature appears at 237 to 241 (KLSKR). K240 is an ATP binding site.

Belongs to the class-I aminoacyl-tRNA synthetase family. Glutamate--tRNA ligase type 1 subfamily. Monomer.

Its subcellular location is the cytoplasm. It catalyses the reaction tRNA(Glu) + L-glutamate + ATP = L-glutamyl-tRNA(Glu) + AMP + diphosphate. Functionally, catalyzes the attachment of glutamate to tRNA(Glu) in a two-step reaction: glutamate is first activated by ATP to form Glu-AMP and then transferred to the acceptor end of tRNA(Glu). This chain is Glutamate--tRNA ligase, found in Pectobacterium atrosepticum (strain SCRI 1043 / ATCC BAA-672) (Erwinia carotovora subsp. atroseptica).